We begin with the raw amino-acid sequence, 233 residues long: 7-cyano-7-deazaguanine synthase (233 aa).

An ATP-binding site is contributed by 18 to 28 (FSGGQDSTTCL). C198, C213, C216, and C219 together coordinate Zn(2+).

This sequence belongs to the QueC family. Zn(2+) serves as cofactor.

It catalyses the reaction 7-carboxy-7-deazaguanine + NH4(+) + ATP = 7-cyano-7-deazaguanine + ADP + phosphate + H2O + H(+). It functions in the pathway purine metabolism; 7-cyano-7-deazaguanine biosynthesis. Functionally, catalyzes the ATP-dependent conversion of 7-carboxy-7-deazaguanine (CDG) to 7-cyano-7-deazaguanine (preQ(0)). This chain is 7-cyano-7-deazaguanine synthase, found in Wolinella succinogenes (strain ATCC 29543 / DSM 1740 / CCUG 13145 / JCM 31913 / LMG 7466 / NCTC 11488 / FDC 602W) (Vibrio succinogenes).